Here is a 137-residue protein sequence, read N- to C-terminus: MGDWKVYISAVLRDQRIDDVAIVGHADNSCVWASRPGGLLAAISPQEVGVLTGPDRHTFLQAGLSVGGRRCCVIRDHLLAEGDGVLDARTKGLDARAVCVGRAPRALLVLMGRRGVHGGILNKTVHELIRGLRMQGA.

This sequence belongs to the profilin family. Interacts with ACTRT3. Testis specific.

Its subcellular location is the cytoplasm. It is found in the cytoskeleton. The protein localises to the nucleus. Its function is as follows. Binds to actin and affects the structure of the cytoskeleton. Slightly reduces actin polymerization. Binds to poly-L-proline, phosphatidylinositol 3-phosphate (PtdIns(3)P), phosphatidylinositol 4,5-bisphosphate (PtdIns(4,5)P2) and phosphatidylinositol 4-phosphate (PtdIns(4)P). May be involved in spermatogenesis. This Homo sapiens (Human) protein is Profilin-3 (PFN3).